A 431-amino-acid polypeptide reads, in one-letter code: Glutamate-1-semialdehyde 2,1-aminomutase (431 aa).

K266 is modified (N6-(pyridoxal phosphate)lysine).

This sequence belongs to the class-III pyridoxal-phosphate-dependent aminotransferase family. HemL subfamily. In terms of assembly, homodimer. The cofactor is pyridoxal 5'-phosphate.

It localises to the cytoplasm. The catalysed reaction is (S)-4-amino-5-oxopentanoate = 5-aminolevulinate. The protein operates within porphyrin-containing compound metabolism; protoporphyrin-IX biosynthesis; 5-aminolevulinate from L-glutamyl-tRNA(Glu): step 2/2. This Wolinella succinogenes (strain ATCC 29543 / DSM 1740 / CCUG 13145 / JCM 31913 / LMG 7466 / NCTC 11488 / FDC 602W) (Vibrio succinogenes) protein is Glutamate-1-semialdehyde 2,1-aminomutase.